We begin with the raw amino-acid sequence, 537 residues long: Eukaryotic translation initiation factor 3 subunit L (537 aa).

Positions 1-19 (MSRRVEFDMSHEDHTDRRR) are enriched in basic and acidic residues. Positions 1–28 (MSRRVEFDMSHEDHTDRRRTNTFSSEED) are disordered. Residues 297–485 (EATKMFVNCL…GPSTVDDDEP (189 aa)) enclose the PCI domain.

Belongs to the eIF-3 subunit L family. Component of the eukaryotic translation initiation factor 3 (eIF-3) complex.

The protein resides in the cytoplasm. Component of the eukaryotic translation initiation factor 3 (eIF-3) complex, which is involved in protein synthesis of a specialized repertoire of mRNAs and, together with other initiation factors, stimulates binding of mRNA and methionyl-tRNAi to the 40S ribosome. The eIF-3 complex specifically targets and initiates translation of a subset of mRNAs involved in cell proliferation. The sequence is that of Eukaryotic translation initiation factor 3 subunit L from Caenorhabditis briggsae.